The following is a 245-amino-acid chain: tRNA (guanine-N(1)-)-methyltransferase (245 aa).

S-adenosyl-L-methionine is bound by residues Gly-113 and 133 to 138; that span reads IGDYVL.

This sequence belongs to the RNA methyltransferase TrmD family. As to quaternary structure, homodimer.

It localises to the cytoplasm. It catalyses the reaction guanosine(37) in tRNA + S-adenosyl-L-methionine = N(1)-methylguanosine(37) in tRNA + S-adenosyl-L-homocysteine + H(+). Specifically methylates guanosine-37 in various tRNAs. This Oceanobacillus iheyensis (strain DSM 14371 / CIP 107618 / JCM 11309 / KCTC 3954 / HTE831) protein is tRNA (guanine-N(1)-)-methyltransferase.